Consider the following 743-residue polypeptide: Myb-related protein B (743 aa).

The disordered stretch occupies residues 1 to 29 (MSRRSRGDDLEDLQYQDTDSDVPEPKENR). The segment covering 9-22 (DLEDLQYQDTDSDV) has biased composition (acidic residues). HTH myb-type domains are found at residues 26–77 (KENR…LRVL), 78–133 (HPDL…NPEV), and 134–184 (KKSS…KRKV). DNA-binding regions (H-T-H motif) lie at residues 54–77 (WKTI…LRVL), 106–129 (WTLI…HNHL), and 157–180 (WAEI…NSTI). Disordered stretches follow at residues 221-262 (VERS…SESA) and 381-406 (VTEN…TPVK).

In terms of assembly, component of the DREAM complex.

Its subcellular location is the nucleus. The sequence is that of Myb-related protein B (mybl2) from Xenopus laevis (African clawed frog).